A 609-amino-acid polypeptide reads, in one-letter code: UvrABC system protein C (609 aa).

The GIY-YIG domain occupies 16–94; the sequence is HLPGVYRHLD…IKSLRPRYNI (79 aa). The UVR domain maps to 203–238; that stretch reads REVMDEIEARMLQASTELRFEEAAVLRDQMGSLSKV.

Belongs to the UvrC family. In terms of assembly, interacts with UvrB in an incision complex.

The protein localises to the cytoplasm. The UvrABC repair system catalyzes the recognition and processing of DNA lesions. UvrC both incises the 5' and 3' sides of the lesion. The N-terminal half is responsible for the 3' incision and the C-terminal half is responsible for the 5' incision. The polypeptide is UvrABC system protein C (Bordetella pertussis (strain Tohama I / ATCC BAA-589 / NCTC 13251)).